A 323-amino-acid polypeptide reads, in one-letter code: Peroxisome biogenesis protein 20 (323 aa).

A Glycyl cysteine thioester (Cys-Gly) (interchain with G-Cter in ubiquitin) cross-link involves residue cysteine 8. Residue lysine 19 forms a Glycyl lysine isopeptide (Lys-Gly) (interchain with G-Cter in ubiquitin) linkage. Short sequence motifs (wxxxF/Y motif) lie at residues 89-93 (WSSEF), 102-105 (WVED), and 141-145 (WTQEF).

The protein belongs to the peroxisomal targeting signal receptor family. As to quaternary structure, interacts (via WxxxF/Y and LVxEF motifs) with PEX14; promoting translocation through the PEX13-PEX14 docking complex. Interacts with PEX7. Monoubiquitinated at Cys-8 by PEX2 during PEX20 passage through the PEX2-PEX10-PEX12 retrotranslocation channel: monoubiquitination acts as a signal for PEX20 extraction and is required for proper export from peroxisomes and recycling. When PEX5 recycling is compromised, polyubiquitinated at Lys-19 by PEX10 during its passage through the retrotranslocation channel, leading to its degradation.

Its subcellular location is the cytoplasm. It localises to the cytosol. The protein resides in the peroxisome matrix. Functionally, coreceptor required for the peroxisomal import of proteins containing a C-terminal PTS2-type peroxisomal targeting signal, such as 3-oxoacyl-CoA thiolase. Acts via its interaction with PEX7, promoting association between PEX7 bound to cargo proteins and the PEX13-PEX14 docking complex. PEX20 along with PEX7 and PTS2-containing cargo proteins are tranlocated into peroxisomes by passing through the PEX13-PEX14 docking complex. PEX20 coreceptor is then retrotranslocated into the cytosol, leading to release of bound cargo in the peroxisome matrix, and reset for a subsequent peroxisome import cycle. Also mediates peroxisomal import of proteins that do not contain PTS1- or PTS2-type peroxisomal targeting signals, such as acyl-CoA oxidases (Aox) izozymes. Import of acyl-CoA oxidases (Aox) izozymes is independent of PEX7. Required for PEX7 ubiquitination. The chain is Peroxisome biogenesis protein 20 from Komagataella pastoris (Yeast).